A 608-amino-acid chain; its full sequence is Pentatricopeptide repeat-containing protein 1, apicoplast (608 aa).

7 PPR repeats span residues 165-199, 200-230, 236-270, 336-370, 372-402, 410-445, and 446-480; these read TTLAFNAAMSAVEKKGCLSTMLDLIGTMKSKNIKP, DLVSYKLVLSLCDKYHLVDTAEILFEEMIES, NYEIYAIMISCYAKTGNGYKAIELFEKLRNDPFVE, QYSEYANVIYACNISNLYEQGIKYFEELLKSGKYM, SIFVFENIFDLLSKNGDYEKSLEYYNNLKND, NVNILNNLLKALSIHNKINVAEDIWNNEFDELLLTP, and NNLSYQILLKIYSHIDNYEKAFKLFKEMQVNKLLN.

Belongs to the PPR family. P subfamily. As to quaternary structure, homodimer.

It is found in the plastid. The protein resides in the apicoplast. Binds to apicoplast RNA transcripts, preferentially to the motif UUAU, and protects RNA transcripts from degradation by ribonuclease. The sequence is that of Pentatricopeptide repeat-containing protein 1, apicoplast from Plasmodium falciparum (isolate 3D7).